Here is a 70-residue protein sequence, read N- to C-terminus: DNA-directed RNA polymerase subunit epsilon (70 aa).

It belongs to the RNA polymerase subunit epsilon family. In terms of assembly, RNAP is composed of a core of 2 alpha, a beta and a beta' subunit. The core is associated with a delta subunit, and at least one of epsilon or omega. When a sigma factor is associated with the core the holoenzyme is formed, which can initiate transcription.

The enzyme catalyses RNA(n) + a ribonucleoside 5'-triphosphate = RNA(n+1) + diphosphate. A non-essential component of RNA polymerase (RNAP). This is DNA-directed RNA polymerase subunit epsilon from Leuconostoc mesenteroides subsp. mesenteroides (strain ATCC 8293 / DSM 20343 / BCRC 11652 / CCM 1803 / JCM 6124 / NCDO 523 / NBRC 100496 / NCIMB 8023 / NCTC 12954 / NRRL B-1118 / 37Y).